We begin with the raw amino-acid sequence, 426 residues long: PI-PLC X domain-containing protein At5g67130 (426 aa).

Residues 1 to 28 form the signal peptide; that stretch reads MSACINGLCRAVTVSLLLLLLSFSFSSA. One can recognise a PI-PLC X-box domain in the interval 76-232; sequence IINGLPFNKY…MVQENHRLLV (157 aa). 2 N-linked (GlcNAc...) asparagine glycosylation sites follow: Asn151 and Asn255. Residues 258 to 277 form a disordered region; the sequence is GDPGVKRGSCPNRKESQPLN. Residue Asn370 is glycosylated (N-linked (GlcNAc...) asparagine). Ser404 is lipidated: GPI-anchor amidated serine. Residues 405-426 constitute a propeptide, removed in mature form; the sequence is VAQLNNIVVFCFSLLPLLIFLL.

The protein localises to the cell membrane. In Arabidopsis thaliana (Mouse-ear cress), this protein is PI-PLC X domain-containing protein At5g67130.